The chain runs to 343 residues: Protein phosphatase 2C homolog 7, mitochondrial (343 aa).

The N-terminal 39 residues, 1-39 (MFANVGFRTLRVSRGPLYGSCSQIISFSKRTFYSSAKSG), are a transit peptide targeting the mitochondrion. The region spanning 76 to 342 (IYQKLKDSIR…DDITVVVVRV (267 aa)) is the PPM-type phosphatase domain. Residues Asp109, Gly110, and Asp265 each contribute to the Mn(2+) site.

The cofactor is Mg(2+). Mn(2+) serves as cofactor.

The protein resides in the mitochondrion. The enzyme catalyses O-phospho-L-seryl-[protein] + H2O = L-seryl-[protein] + phosphate. The catalysed reaction is O-phospho-L-threonyl-[protein] + H2O = L-threonyl-[protein] + phosphate. Its function is as follows. Protein phosphatase which positively regulates biosynthesis of the ubiquinone, coenzyme Q. Dephosphorylates and activates the ubiquinone biosynthesis protein CAT5/COQ7. Also dephosphorylates CIT1 on 'Ser-462', which leads to its activation. In Saccharomyces cerevisiae (strain ATCC 204508 / S288c) (Baker's yeast), this protein is Protein phosphatase 2C homolog 7, mitochondrial (PTC7).